Consider the following 473-residue polypeptide: Photosystem II CP43 reaction center protein (473 aa).

A propeptide spanning residues 1–14 (MKTLYSLRRFYHVE) is cleaved from the precursor. Threonine 15 carries the post-translational modification N-acetylthreonine. At threonine 15 the chain carries Phosphothreonine. The next 5 helical transmembrane spans lie at 69-93 (LFEVAHFVPEKPMYEQGLILLPHLA), 134-155 (LLGPETLEESFPFFGYVWKDRN), 178-200 (KALYFGGVYDTWAPGGGDVRKIT), 255-275 (KPFAWARRALVWSGEAYLSYS), and 291-312 (WFNNTAYPSEFYGPTGPEASQA). A [CaMn4O5] cluster-binding site is contributed by glutamate 367. The helical transmembrane segment at 447–471 (RARAAAAGFEKGIDRDFEPVLSMTP) threads the bilayer.

Belongs to the PsbB/PsbC family. PsbC subfamily. As to quaternary structure, PSII is composed of 1 copy each of membrane proteins PsbA, PsbB, PsbC, PsbD, PsbE, PsbF, PsbH, PsbI, PsbJ, PsbK, PsbL, PsbM, PsbT, PsbX, PsbY, PsbZ, Psb30/Ycf12, at least 3 peripheral proteins of the oxygen-evolving complex and a large number of cofactors. It forms dimeric complexes. It depends on Binds multiple chlorophylls and provides some of the ligands for the Ca-4Mn-5O cluster of the oxygen-evolving complex. It may also provide a ligand for a Cl- that is required for oxygen evolution. PSII binds additional chlorophylls, carotenoids and specific lipids. as a cofactor.

It is found in the plastid. Its subcellular location is the chloroplast thylakoid membrane. Its function is as follows. One of the components of the core complex of photosystem II (PSII). It binds chlorophyll and helps catalyze the primary light-induced photochemical processes of PSII. PSII is a light-driven water:plastoquinone oxidoreductase, using light energy to abstract electrons from H(2)O, generating O(2) and a proton gradient subsequently used for ATP formation. This Atropa belladonna (Belladonna) protein is Photosystem II CP43 reaction center protein.